The following is a 338-amino-acid chain: Ornithine carbamoyltransferase (338 aa).

Carbamoyl phosphate contacts are provided by residues 56 to 59 (STRT), Gln83, Arg107, and 134 to 137 (HPTQ). Residues Asn168, Asp232, and 236-237 (SM) contribute to the L-ornithine site. Carbamoyl phosphate contacts are provided by residues 274–275 (CL) and Arg320.

Belongs to the aspartate/ornithine carbamoyltransferase superfamily. OTCase family.

The protein localises to the cytoplasm. It catalyses the reaction carbamoyl phosphate + L-ornithine = L-citrulline + phosphate + H(+). It functions in the pathway amino-acid biosynthesis; L-arginine biosynthesis; L-arginine from L-ornithine and carbamoyl phosphate: step 1/3. In terms of biological role, reversibly catalyzes the transfer of the carbamoyl group from carbamoyl phosphate (CP) to the N(epsilon) atom of ornithine (ORN) to produce L-citrulline. The polypeptide is Ornithine carbamoyltransferase (Photorhabdus laumondii subsp. laumondii (strain DSM 15139 / CIP 105565 / TT01) (Photorhabdus luminescens subsp. laumondii)).